The chain runs to 435 residues: Endosome-associated-trafficking regulator 1 (435 aa).

Phosphoserine occurs at positions 18 and 147. 2 disordered regions span residues Ala-136–Ser-185 and Glu-225–Asp-251. Positions Leu-173–Thr-182 are enriched in acidic residues. Residues Leu-173 to Pro-198 form a required for interaction with PTPN13 region. Residues Ser-240–Ala-250 show a composition bias toward low complexity. Residues Ser-243 and Ser-247 each carry the phosphoserine modification. Residues Asp-261 to Cys-371 are a coiled coil.

This sequence belongs to the ENTR1 family. Found in a complex with ENTR1, PTPN13 and GIT1. Interacts with PTPN13 (via the FERM domain). Interacts (via N-terminus) with GIT1 (via N- and C-terminus); this interaction is direct. Interacts with NOD2. Interacts (via N-terminus) with IFT88. Interacts with VPS35. Post-translationally, phosphorylated. In terms of tissue distribution, expressed in the colon (at protein level).

It is found in the cytoplasm. Its subcellular location is the early endosome. The protein resides in the endosome. It localises to the recycling endosome. The protein localises to the midbody. It is found in the cytoskeleton. Its subcellular location is the microtubule organizing center. The protein resides in the centrosome. It localises to the cilium basal body. Endosome-associated protein that plays a role in membrane receptor sorting, cytokinesis and ciliogenesis. Involved in the endosome-to-plasma membrane trafficking and recycling of SNX27-retromer-dependent cargo proteins, such as GLUT1. Involved in the regulation of cytokinesis; the function may involve PTPN13 and GIT1. Plays a role in the formation of cilia. Involved in cargo protein localization, such as PKD2, at primary cilia. Involved in the presentation of the tumor necrosis factor (TNF) receptor TNFRSF1A on the cell surface, and hence in the modulation of the TNF-induced apoptosis. This is Endosome-associated-trafficking regulator 1 from Homo sapiens (Human).